We begin with the raw amino-acid sequence, 243 residues long: MSRTDDTGEESGVAVDPALNGADLTVRQRKVLEVIRTSVSERGYPPSIREIGDAVGLTSTSSVAHQLRALERKGYLRRDPNRPRAVDVRGLDEAVRAVTALPGAALEEPDTLAEDTGRPTPTFVPVLGRIAAGGPILAEQAVEDVFPLPRELVGDGSLFLLRVVGQSMVDAAICDGDWVVVRQQNVAENGDIVAAMIDGEATVKTFKRTGKDVWLMPHNPLFEPIPGNDARILGKVVTVIRKI.

A DNA-binding region (H-T-H motif) is located at residues 48-68 (IREIGDAVGLTSTSSVAHQLR). Catalysis depends on for autocatalytic cleavage activity residues serine 167 and lysine 204.

The protein belongs to the peptidase S24 family. As to quaternary structure, homodimer.

It catalyses the reaction Hydrolysis of Ala-|-Gly bond in repressor LexA.. In terms of biological role, represses a number of genes involved in the response to DNA damage (SOS response), including recA and lexA. In the presence of single-stranded DNA, RecA interacts with LexA causing an autocatalytic cleavage which disrupts the DNA-binding part of LexA, leading to derepression of the SOS regulon and eventually DNA repair. This Nocardia farcinica (strain IFM 10152) protein is LexA repressor 2.